The sequence spans 217 residues: Pro-Pro endopeptidase (217 aa).

An N-terminal signal peptide occupies residues 1 to 27 (MKWDKRVVALILAVMIVCPLFAAPAHA). Residues 30 to 216 (QSILDKLVVL…TYEFMAKLFA (187 aa)) form the ATLF-like domain. The plays a crucial role in substrate specificity stretch occupies residues 112-115 (SERV). Zn(2+) is bound at residue His137. The Proton acceptor role is filled by Glu138. Positions 141, 174, and 181 each coordinate Zn(2+).

Belongs to the peptidase M34 family. Pro-Pro endopeptidase subfamily. Monomer. The cofactor is Zn(2+).

It is found in the secreted. It catalyses the reaction The enzyme catalyzes the hydrolytic cleavage of peptide bonds between two proline residues.. Functionally, zinc-dependent endoprotease with a unique preference for proline residues surrounding the scissile bond, which cleaves in a PLP-|-PVP motif. Cleaves the cell surface protein encoded by an adjacent gene, which contains two PPEP-2 cleaving sites and putative extracellular matrix-binding domains. Thereby, may have a role in the regulation of P.alvei adhesion. Is not able to cleave within the PVP-|-PVQ motif, and only shows a very poor cleavage of the VNP-|-PVP motif in vitro, which is the optimal substrate peptide for PPEP-1 from P.difficile. The polypeptide is Pro-Pro endopeptidase (Paenibacillus alvei (strain ATCC 6344 / DSM 29 / NBRC 3343 / NCIMB 9371 / NCTC 6352) (Bacillus alvei)).